Consider the following 275-residue polypeptide: Diaminopimelate epimerase (275 aa).

Residues Asn12, Gln45, and Asn65 each contribute to the substrate site. Cys74 (proton donor) is an active-site residue. Residues 75-76 (GN), Asn158, Asn191, and 209-210 (ER) contribute to the substrate site. Cys218 acts as the Proton acceptor in catalysis. 219 to 220 (GT) provides a ligand contact to substrate.

This sequence belongs to the diaminopimelate epimerase family. In terms of assembly, homodimer.

It localises to the cytoplasm. It carries out the reaction (2S,6S)-2,6-diaminopimelate = meso-2,6-diaminopimelate. Its pathway is amino-acid biosynthesis; L-lysine biosynthesis via DAP pathway; DL-2,6-diaminopimelate from LL-2,6-diaminopimelate: step 1/1. Functionally, catalyzes the stereoinversion of LL-2,6-diaminopimelate (L,L-DAP) to meso-diaminopimelate (meso-DAP), a precursor of L-lysine and an essential component of the bacterial peptidoglycan. In Shewanella denitrificans (strain OS217 / ATCC BAA-1090 / DSM 15013), this protein is Diaminopimelate epimerase.